Here is a 91-residue protein sequence, read N- to C-terminus: MSEEKKVVLTREYVINLRRTREVSRTKRAKYAVGLIRRFVARHLKVEPKAVKLGQALNEALWARSIEKPPRRVHVVVEKLDDGTVRVELKQ.

Belongs to the eukaryotic ribosomal protein eL31 family.

The sequence is that of Large ribosomal subunit protein eL31 from Pyrobaculum calidifontis (strain DSM 21063 / JCM 11548 / VA1).